The sequence spans 353 residues: Probable dual-specificity RNA methyltransferase RlmN (353 aa).

The active-site Proton acceptor is E104. Residues 112–341 form the Radical SAM core domain; sequence DGGRKTICIS…ILNRRSPGKD (230 aa). C119 and C346 are joined by a disulfide. 3 residues coordinate [4Fe-4S] cluster: C126, C130, and C133. Residues 173-174, S205, 228-230, and N304 each bind S-adenosyl-L-methionine; these read GE and SLN. C346 (S-methylcysteine intermediate) is an active-site residue.

This sequence belongs to the radical SAM superfamily. RlmN family. Requires [4Fe-4S] cluster as cofactor.

Its subcellular location is the cytoplasm. The enzyme catalyses adenosine(2503) in 23S rRNA + 2 reduced [2Fe-2S]-[ferredoxin] + 2 S-adenosyl-L-methionine = 2-methyladenosine(2503) in 23S rRNA + 5'-deoxyadenosine + L-methionine + 2 oxidized [2Fe-2S]-[ferredoxin] + S-adenosyl-L-homocysteine. It catalyses the reaction adenosine(37) in tRNA + 2 reduced [2Fe-2S]-[ferredoxin] + 2 S-adenosyl-L-methionine = 2-methyladenosine(37) in tRNA + 5'-deoxyadenosine + L-methionine + 2 oxidized [2Fe-2S]-[ferredoxin] + S-adenosyl-L-homocysteine. Its function is as follows. Specifically methylates position 2 of adenine 2503 in 23S rRNA and position 2 of adenine 37 in tRNAs. This is Probable dual-specificity RNA methyltransferase RlmN from Leptospira interrogans serogroup Icterohaemorrhagiae serovar Lai (strain 56601).